The primary structure comprises 168 residues: Alpha-amylase/trypsin inhibitor CM3 (168 aa).

The N-terminal stretch at 1–25 is a signal peptide; it reads MACKSSCSLLLLAAVLLSVLAAASA.

The protein belongs to the protease inhibitor I6 (cereal trypsin/alpha-amylase inhibitor) family. As to quaternary structure, subunit of the tetrameric inhibitor. Five disulfide bonds, which are essential for the inhibitor activity, are probably present. As to expression, developing endosperm.

The protein resides in the secreted. Functionally, alpha-amylase/trypsin inhibitor. It could be involved in insect defense mechanisms. The protein is Alpha-amylase/trypsin inhibitor CM3 of Triticum aestivum (Wheat).